The sequence spans 521 residues: SET and MYND domain-containing protein DDB_G0292140 (521 aa).

Positions 1–101 are disordered; the sequence is MDGVIESPSN…KIKKSKKSIK (101 aa). Low complexity predominate over residues 12–55; the sequence is TIKISPSTSDSSTTTPIITTPPTQSTATVTTKAAATTTTTEAST. Residues 56–65 are compositionally biased toward pro residues; the sequence is TPPPPQPTPT. The span at 66 to 90 shows a compositional bias: low complexity; that stretch reads PTQSTATVTKEVETTTETIPPIVTK. The span at 91–101 shows a compositional bias: basic residues; that stretch reads GKIKKSKKSIK. In terms of domain architecture, SET spans 122–406; the sequence is WPIHVYSHPI…EGDELTISYI (285 aa). Zn(2+)-binding residues include Cys167, Cys170, Cys188, Cys191, Cys197, Cys201, His209, and Cys213. Residues 167–213 form an MYND-type zinc finger; sequence CQHCFLEVPLNQQILPTDFYMCEGCQRVGYCSANCRCIDYSQHRFEC. The tract at residues 442–521 is disordered; it reads QTGTLEKDDD…QDHQNNDKSN (80 aa). The span at 448–469 shows a compositional bias: acidic residues; the sequence is KDDDDNDDEKEKMDEDDDEKDD. Residues 470–485 are compositionally biased toward basic and acidic residues; that stretch reads DINNKNDKKSKYKSDG. Residues 486–495 show a composition bias toward acidic residues; that stretch reads STDDEEDEDN. The span at 497–514 shows a compositional bias: low complexity; that stretch reads NNKNNNKNKNNNSNNQDH.

It belongs to the class V-like SAM-binding methyltransferase superfamily.

In terms of biological role, probable methyltransferase. The protein is SET and MYND domain-containing protein DDB_G0292140 of Dictyostelium discoideum (Social amoeba).